A 1379-amino-acid chain; its full sequence is ABC multidrug transporter MDR2 (1379 aa).

Residues 65–85 traverse the membrane as a helical segment; sequence IALIVIGTIAGIGAGIPFPLL. The region spanning 69-367 is the ABC transmembrane type-1 1 domain; it reads VIGTIAGIGA…MAPFMHIFAS (299 aa). Asparagine 97 is a glycosylation site (N-linked (GlcNAc...) asparagine). 5 helical membrane passes run 119–139, 193–213, 215–235, 301–321, and 336–356; these read VLQV…HTGC, KVGL…VAFL, VATI…MAFG, IQFG…FWQG, and VSVG…FVLS. The 280-residue stretch at 403 to 682 folds into the ABC transporter 1 domain; it reads IELQDVTFNY…DGVYAGMVRL (280 aa). 438–445 contacts ATP; sequence GTSGSGKS. Asparagine 552 and asparagine 633 each carry an N-linked (GlcNAc...) asparagine glycan. The segment at 738 to 758 is disordered; it reads YMPEEADSLPTEPENEKEKPK. 4 helical membrane-spanning segments follow: residues 781-801, 820-840, 901-921, and 922-942; these read LGLI…VIFG, GMLF…AVIV, IGVL…SHVI, and AWRI…SGVL. In terms of domain architecture, ABC transmembrane type-1 2 spans 781–1068; that stretch reads LGLITSIMIG…MFALVPDISK (288 aa). Asparagine 989 is a glycosylation site (N-linked (GlcNAc...) asparagine). A run of 2 helical transmembrane segments spans residues 1008–1028 and 1032–1052; these read FWLS…YWWG and ILAG…LLFS. Residues 1135 to 1374 enclose the ABC transporter 2 domain; it reads VQFRNVHFRY…CESYRANVIH (240 aa). An ATP-binding site is contributed by 1170 to 1177; that stretch reads GPSGSGKS.

Belongs to the ABC transporter superfamily. ABCB family. Multidrug resistance exporter (TC 3.A.1.201) subfamily.

It localises to the cell membrane. Pleiotropic ABC efflux transporter that may be involved in the modulation susceptibility to a wide range of unrelated cytotoxic compounds. This is ABC multidrug transporter MDR2 from Trichophyton equinum (strain ATCC MYA-4606 / CBS 127.97) (Horse ringworm fungus).